A 162-amino-acid polypeptide reads, in one-letter code: D-beta-D-heptose 1-phosphate adenylyltransferase (162 aa).

The enzyme catalyses D-glycero-beta-D-manno-heptose 1-phosphate + ATP + H(+) = ADP-D-glycero-beta-D-manno-heptose + diphosphate. The protein operates within nucleotide-sugar biosynthesis; ADP-L-glycero-beta-D-manno-heptose biosynthesis; ADP-L-glycero-beta-D-manno-heptose from D-glycero-beta-D-manno-heptose 7-phosphate: step 3/4. It functions in the pathway bacterial outer membrane biogenesis; LPS core biosynthesis. In terms of biological role, catalyzes the ADP transfer from ATP to D-glycero-beta-D-manno-heptose 1-phosphate, yielding ADP-D-glycero-beta-D-manno-heptose. Cannot use GTP, UTP, or CTP as substrate. Is not active against the alpha-anomer substrate. Is also able to catalyze the ADP transfer to beta-glucose 1-phosphate in vitro, yielding ADP-beta-glucose. In Bordetella bronchiseptica (strain ATCC BAA-588 / NCTC 13252 / RB50) (Alcaligenes bronchisepticus), this protein is D-beta-D-heptose 1-phosphate adenylyltransferase.